Consider the following 370-residue polypeptide: D-alanine--D-alanine ligase (370 aa).

One can recognise an ATP-grasp domain in the interval 144-352 (KKIFADAGIP…YSALIERLVD (209 aa)). 177 to 232 (EEVLTYPVFVKPANLGSSVGISKATNKKELEDAMTEAFLYDRRVVVEQGVVAREIE) is an ATP binding site. 3 residues coordinate Mg(2+): D306, E319, and N321.

The protein belongs to the D-alanine--D-alanine ligase family. The cofactor is Mg(2+). It depends on Mn(2+) as a cofactor.

The protein localises to the cytoplasm. The catalysed reaction is 2 D-alanine + ATP = D-alanyl-D-alanine + ADP + phosphate + H(+). The protein operates within cell wall biogenesis; peptidoglycan biosynthesis. Functionally, cell wall formation. The sequence is that of D-alanine--D-alanine ligase from Listeria welshimeri serovar 6b (strain ATCC 35897 / DSM 20650 / CCUG 15529 / CIP 8149 / NCTC 11857 / SLCC 5334 / V8).